Here is a 144-residue protein sequence, read N- to C-terminus: 3-hydroxyacyl-[acyl-carrier-protein] dehydratase FabZ (144 aa).

Residue His-48 is part of the active site.

It belongs to the thioester dehydratase family. FabZ subfamily.

Its subcellular location is the cytoplasm. It catalyses the reaction a (3R)-hydroxyacyl-[ACP] = a (2E)-enoyl-[ACP] + H2O. Involved in unsaturated fatty acids biosynthesis. Catalyzes the dehydration of short chain beta-hydroxyacyl-ACPs and long chain saturated and unsaturated beta-hydroxyacyl-ACPs. This is 3-hydroxyacyl-[acyl-carrier-protein] dehydratase FabZ from Bacillus cytotoxicus (strain DSM 22905 / CIP 110041 / 391-98 / NVH 391-98).